A 354-amino-acid chain; its full sequence is Guanine nucleotide-binding protein G(o) subunit alpha (354 aa).

Gly-2 is lipidated: N-myristoyl glycine. Cys-3 carries S-palmitoyl cysteine lipidation. A G-alpha domain is found at 32 to 354 (KDIKLLLLGA…ANNLRGCGLY (323 aa)). The tract at residues 35–48 (KLLLLGAGESGKST) is G1 motif. GTP is bound by residues 40–47 (GAGESGKS), 176–182 (LRTRVKT), 201–205 (DVGGQ), 270–273 (NKKD), and Ala-326. 2 residues coordinate Mg(2+): Ser-47 and Thr-182. The G2 motif stretch occupies residues 174-182 (DILRTRVKT). Residues 197 to 206 (FKLFDVGGQR) form a G3 motif region. The segment at 266-273 (ILFLNKKD) is G4 motif. The interval 324–329 (TCATDT) is G5 motif.

Belongs to the G-alpha family. G(i/o/t/z) subfamily. G proteins are composed of 3 units; alpha, beta and gamma. The alpha chain contains the guanine nucleotide binding site. Interacts (in GDP-bound form) with gpr-1; gpr-1 forms a complex with gpr-2 and lin-5. Interacts (in GDP-bound form) with gpb-1. Interacts (in GDP-bound form) with gbas-1 (via GBA motif); the interaction leads to activation of goa-1. Expressed in the ASER neuron and the intestine.

In terms of biological role, guanine nucleotide-binding proteins (G proteins) are involved as modulators or transducers in various transmembrane signaling systems. In the 1-cell embryo, probably together with gpa-16, controls nuclear rotation and spindle elongation during mitosis. During the first embryonic cell divisions, plays a role in gpr-1/2 cortical localization and in the proper orientation of EMS blastomere mitotic spindle. Polarity determinants (par genes) may regulate lin-5/gpr-1/gpr-2/goa-1 locally to create the asymmetric forces that drive spindle movement. Involved in chemosensory responses to attractive and repellent odors detected by AWC and AWB sensory neurons, respectively. In ASER neurons, acts downstream of glr-3 to regulate cold avoidance behavior via calcium signaling, and it may also play a role in sensing cold in the intestine. Negatively regulates axon regeneration after injury downstream of the inhibitory compound arachidonoyl ethanolamide (AEA) by antagonizing the activation of the JNK pathway (mlk-1/mek-1/kgb-1). In neurons, may negatively regulate diacylglycerol (DAG) production mediated by egl-30 signaling cascade and thereby negatively regulates acetylcholine release. Couples to the muscarinic acetylcholine receptor gar-2 to negatively regulate cholinergic receptor activity in the presence of high levels of acetylcholine in ventral cord motor neurons. Plays a role in the navigational capacity of sperm and the targeting of sperm derived from males to the fertilization site in the uterus of hermaphrodites. Involved in egg-laying and in regulating dopamine-mediated locomotion. Most likely couples to the dopamine receptors dop-2 and dop-3 to positively regulate the dopamine-mediated suppression of crh-1/CREB1 transcription factor activation in cholinergic SIA neurons in the presence of food. The polypeptide is Guanine nucleotide-binding protein G(o) subunit alpha (Caenorhabditis elegans).